The sequence spans 861 residues: uncharacterized protein (861 aa).

12 helical membrane passes run 4-24 (KHIM…AFFV), 75-95 (LGYY…VWLL), 106-126 (TLFW…LIIF), 159-179 (EAYW…VLGA), 199-219 (LINN…YVLF), 238-258 (LFLV…VPVV), 282-302 (ILFS…LFII), 313-333 (FAGL…ASVF), 343-363 (FEYV…SQLS), 370-385 (LLPA…LYHI), 396-416 (ANES…AAAF), and 425-445 (VYGI…KYAL). A coiled-coil region spans residues 738-766 (ELRNIALYEENYQTLKNAVMQNKTEKADK). The chain crosses the membrane as a helical span at residues 833–853 (PYFKISAIISLVSLLLAVFYI).

The protein resides in the cell membrane. This is an uncharacterized protein from Bacillus subtilis (strain 168).